We begin with the raw amino-acid sequence, 421 residues long: Aspartokinase (421 aa).

7-10 serves as a coordination point for ATP; that stretch reads KYGG. 25-30 contacts substrate; that stretch reads RIVETK. Residue Ser-41 coordinates ATP. Residues 45–49, Glu-74, 125–126, 151–154, and Ser-154 each bind substrate; these read DTTDD, LD, and RGGS. ATP is bound by residues 174 to 175, 180 to 185, and Lys-210; these read TD and FTADPR. ACT domains are found at residues 267-348 and 349-421; these read VTVV…GKVS and LIGA…GTGR. Substrate is bound by residues Asp-274, 274 to 279, 292 to 294, Gln-298, 360 to 361, 374 to 375, and 381 to 382; these read DVPGYA, NID, VT, NI, and SE.

The protein belongs to the aspartokinase family. As to quaternary structure, heterotetramer consisting of 2 isoforms Alpha (catalytic and regulation) and of a homodimer of 2 isoforms Beta (regulation).

The catalysed reaction is L-aspartate + ATP = 4-phospho-L-aspartate + ADP. It functions in the pathway amino-acid biosynthesis; L-lysine biosynthesis via DAP pathway; (S)-tetrahydrodipicolinate from L-aspartate: step 1/4. The protein operates within amino-acid biosynthesis; L-methionine biosynthesis via de novo pathway; L-homoserine from L-aspartate: step 1/3. It participates in amino-acid biosynthesis; L-threonine biosynthesis; L-threonine from L-aspartate: step 1/5. With respect to regulation, feedback inhibition by lysine and threonine. In terms of biological role, catalyzes the phosphorylation of the beta-carboxyl group of aspartic acid with ATP to yield 4-phospho-L-aspartate, which is involved in the branched biosynthetic pathway leading to the biosynthesis of amino acids lysine, threonine, isoleucine and methionine. This chain is Aspartokinase (ask), found in Mycolicibacterium smegmatis (Mycobacterium smegmatis).